We begin with the raw amino-acid sequence, 310 residues long: L-lactate dehydrogenase (310 aa).

NAD(+) contacts are provided by residues Val17, Asp38, Lys43, Tyr69, and 83 to 84; that span reads GA. Residues Gln86 and Arg92 each contribute to the substrate site. NAD(+)-binding positions include Ser105, 122–124, and Ser147; that span reads ATN. A substrate-binding site is contributed by 124 to 127; that stretch reads NPVD. 152–155 lines the substrate pocket; the sequence is DTAR. Beta-D-fructose 1,6-bisphosphate-binding residues include Arg157 and His172. His179 serves as the catalytic Proton acceptor. Tyr218 carries the phosphotyrosine modification. Thr227 serves as a coordination point for substrate.

Belongs to the LDH/MDH superfamily. LDH family. In terms of assembly, homotetramer.

Its subcellular location is the cytoplasm. The catalysed reaction is (S)-lactate + NAD(+) = pyruvate + NADH + H(+). Its pathway is fermentation; pyruvate fermentation to lactate; (S)-lactate from pyruvate: step 1/1. With respect to regulation, allosterically activated by fructose 1,6-bisphosphate (FBP). Functionally, catalyzes the conversion of lactate to pyruvate. The polypeptide is L-lactate dehydrogenase (Halalkalibacterium halodurans (strain ATCC BAA-125 / DSM 18197 / FERM 7344 / JCM 9153 / C-125) (Bacillus halodurans)).